A 388-amino-acid chain; its full sequence is Succinate--CoA ligase [ADP-forming] subunit beta (388 aa).

One can recognise an ATP-grasp domain in the interval lysine 9–glutamate 244. Residues lysine 46, glycine 53–glycine 55, glutamate 99, alanine 102, and glutamate 107 each bind ATP. 2 residues coordinate Mg(2+): asparagine 199 and aspartate 213. Residues asparagine 264 and glycine 321–methionine 323 contribute to the substrate site.

This sequence belongs to the succinate/malate CoA ligase beta subunit family. As to quaternary structure, heterotetramer of two alpha and two beta subunits. Mg(2+) is required as a cofactor.

The catalysed reaction is succinate + ATP + CoA = succinyl-CoA + ADP + phosphate. It carries out the reaction GTP + succinate + CoA = succinyl-CoA + GDP + phosphate. It functions in the pathway carbohydrate metabolism; tricarboxylic acid cycle; succinate from succinyl-CoA (ligase route): step 1/1. Its function is as follows. Succinyl-CoA synthetase functions in the citric acid cycle (TCA), coupling the hydrolysis of succinyl-CoA to the synthesis of either ATP or GTP and thus represents the only step of substrate-level phosphorylation in the TCA. The beta subunit provides nucleotide specificity of the enzyme and binds the substrate succinate, while the binding sites for coenzyme A and phosphate are found in the alpha subunit. In Cupriavidus taiwanensis (strain DSM 17343 / BCRC 17206 / CCUG 44338 / CIP 107171 / LMG 19424 / R1) (Ralstonia taiwanensis (strain LMG 19424)), this protein is Succinate--CoA ligase [ADP-forming] subunit beta.